Consider the following 425-residue polypeptide: Xyloglucan O-acetyltransferase 2 (425 aa).

Over 1–18 (MGSPFKDHHTLHPSLVRK) the chain is Cytoplasmic. The chain crosses the membrane as a helical; Signal-anchor for type II membrane protein span at residues 19–38 (LIPWTFYAMVPLVLFRVYLY). The Lumenal portion of the chain corresponds to 39–425 (PYPLHHTTTT…KWEYASRREQ (387 aa)). Disulfide bonds link Cys68/Cys118, Cys89/Cys154, Cys98/Cys398, and Cys313/Cys394. Residue Asn85 is glycosylated (N-linked (GlcNAc...) asparagine). The GDS motif motif lies at 141–143 (GDS). Residue Ser143 is the Nucleophile of the active site. N-linked (GlcNAc...) asparagine glycosylation is found at Asn183 and Asn259. The active-site Proton donor is Asp393. Positions 393–396 (DCVH) match the DXXH motif motif. The Proton acceptor role is filled by His396.

This sequence belongs to the PC-esterase family. TBL subfamily.

The protein localises to the golgi apparatus membrane. Its function is as follows. Xyloglucan acetyltransferase that catalyzes the acetylation of fucosylated Gal residues on xyloglucan side chains. Predominantly catalyze 6-O-monoacetylation of Gal residues in the Fuc-Gal-Xyl trisaccharide side chains of xyloglucan oligomers. The polypeptide is Xyloglucan O-acetyltransferase 2 (Populus trichocarpa (Western balsam poplar)).